The chain runs to 192 residues: 7-methyl-GTP pyrophosphatase (192 aa).

Asp-69 functions as the Proton acceptor in the catalytic mechanism.

It belongs to the Maf family. YceF subfamily. It depends on a divalent metal cation as a cofactor.

Its subcellular location is the cytoplasm. The enzyme catalyses N(7)-methyl-GTP + H2O = N(7)-methyl-GMP + diphosphate + H(+). Nucleoside triphosphate pyrophosphatase that hydrolyzes 7-methyl-GTP (m(7)GTP). May have a dual role in cell division arrest and in preventing the incorporation of modified nucleotides into cellular nucleic acids. The protein is 7-methyl-GTP pyrophosphatase of Pseudomonas fluorescens (strain Pf0-1).